Here is a 53-residue protein sequence, read N- to C-terminus: UPF0181 protein VC_A0569 (53 aa).

It belongs to the UPF0181 family.

The sequence is that of UPF0181 protein VC_A0569 from Vibrio cholerae serotype O1 (strain ATCC 39315 / El Tor Inaba N16961).